A 357-amino-acid chain; its full sequence is Probable cinnamyl alcohol dehydrogenase 2 (357 aa).

Cysteine 47 serves as a coordination point for Zn(2+). Serine 49 provides a ligand contact to NADP(+). Residues histidine 69, glutamate 70, cysteine 100, cysteine 103, cysteine 106, cysteine 114, and cysteine 163 each coordinate Zn(2+). NADP(+) is bound by residues threonine 167, 188–193 (GLGGVG), 211–216 (SSSNKK), threonine 251, glycine 275, and 298–300 (SFI).

Belongs to the zinc-containing alcohol dehydrogenase family. Homodimer. Requires Zn(2+) as cofactor. In terms of processing, the N-terminus is blocked.

It carries out the reaction (E)-cinnamyl alcohol + NADP(+) = (E)-cinnamaldehyde + NADPH + H(+). It catalyses the reaction (E)-coniferol + NADP(+) = (E)-coniferaldehyde + NADPH + H(+). The enzyme catalyses (E)-sinapyl alcohol + NADP(+) = (E)-sinapaldehyde + NADPH + H(+). The catalysed reaction is (E)-4-coumaroyl alcohol + NADP(+) = (E)-4-coumaraldehyde + NADPH + H(+). It carries out the reaction (E)-caffeyl alcohol + NADP(+) = (E)-caffeyl aldehyde + NADPH + H(+). It participates in aromatic compound metabolism; phenylpropanoid biosynthesis. Functionally, involved in lignin biosynthesis. Catalyzes the final step specific for the production of lignin monomers. Catalyzes the NADPH-dependent reduction of coniferaldehyde, 5-hydroxyconiferaldehyde, sinapaldehyde, 4-coumaraldehyde and caffeyl aldehyde to their respective alcohols. This is Probable cinnamyl alcohol dehydrogenase 2 (CAD19) from Nicotiana tabacum (Common tobacco).